A 410-amino-acid polypeptide reads, in one-letter code: NADH-quinone oxidoreductase subunit H (410 aa).

The next 9 helical transmembrane spans lie at 11-31, 79-99, 119-139, 160-180, 192-212, 257-277, 283-303, 317-337, and 347-367; these read LVAAKAIAVFVFLMLTVLVAI, FVYFVAPIISVIPAFTAFAFI, LPVAVLFILGLSAIGVYGIVL, VISYEVAMGLSFATVFLMAGT, GVWYAFLLLPSFVIYLISMVG, ALAATLFFGGWHAPWPLNMWA, WWPLIWFTAKVWGFLFIYFWL, ALGWKLLIPVSLVWVMVAAII, and YWTPTLVFSSIVVAAAMVLLL. A disordered region spans residues 376 to 410; that stretch reads ARASARQRGDEGTSPEPAFPTPPLLAGATKENAGG.

Belongs to the complex I subunit 1 family. In terms of assembly, NDH-1 is composed of 14 different subunits. Subunits NuoA, H, J, K, L, M, N constitute the membrane sector of the complex.

The protein localises to the cell membrane. It carries out the reaction a quinone + NADH + 5 H(+)(in) = a quinol + NAD(+) + 4 H(+)(out). NDH-1 shuttles electrons from NADH, via FMN and iron-sulfur (Fe-S) centers, to quinones in the respiratory chain. The immediate electron acceptor for the enzyme in this species is believed to be menaquinone. Couples the redox reaction to proton translocation (for every two electrons transferred, four hydrogen ions are translocated across the cytoplasmic membrane), and thus conserves the redox energy in a proton gradient. The chain is NADH-quinone oxidoreductase subunit H from Mycobacterium bovis (strain ATCC BAA-935 / AF2122/97).